A 348-amino-acid chain; its full sequence is Phenylalanine--tRNA ligase alpha subunit (348 aa).

Glutamate 262 lines the Mg(2+) pocket.

This sequence belongs to the class-II aminoacyl-tRNA synthetase family. Phe-tRNA synthetase alpha subunit type 1 subfamily. Tetramer of two alpha and two beta subunits. The cofactor is Mg(2+).

It is found in the cytoplasm. The enzyme catalyses tRNA(Phe) + L-phenylalanine + ATP = L-phenylalanyl-tRNA(Phe) + AMP + diphosphate + H(+). The protein is Phenylalanine--tRNA ligase alpha subunit of Streptococcus pneumoniae (strain JJA).